A 487-amino-acid polypeptide reads, in one-letter code: MAQIYAQTLTETAAALAQGTLTAEEAVRACIDRIEATEPAVHALLATRCEEALAEARAMDAAGYDPAKPLWGVPVTVKDVLSTSGVATTCGSRILENYVPFFDAAAVSRLKDAGAVILAKTNMDEFAMGSSTEKSAFKTTHNPWDLQRVPGGSSGGSAASVAAGQCFASLGTDTGGSVRQPASFCGCVGLKPTYGRVSRYGLVAYGSSLDQIGPVTRSVEDAARVLAVIAGHDARDTTCSDRPVDDYLAALGSRSDLAGLRIGVPAEYWGEGLSGEVDSCCREALKKAEELGATLVDISLPNSRHAIAVYYIVAMAEASSNLARFDGVRFGHRSDNAASLPELYINSRSEGFGDEVQRRIMLGTYVLSSGYYDAYYRKAAQVRRLILQDFEKAFEQCDVICGPASPVTAWKHGAMSGDPLTMYLLDIFTISLNLAGLPGLSLPVGTGTESGMPVGLQILGKAFDEATLLSVAHVLEQRIGRTPVAQI.

Active-site charge relay system residues include Lys78 and Ser153. The active-site Acyl-ester intermediate is Ser177.

The protein belongs to the amidase family. GatA subfamily. Heterotrimer of A, B and C subunits.

It carries out the reaction L-glutamyl-tRNA(Gln) + L-glutamine + ATP + H2O = L-glutaminyl-tRNA(Gln) + L-glutamate + ADP + phosphate + H(+). Allows the formation of correctly charged Gln-tRNA(Gln) through the transamidation of misacylated Glu-tRNA(Gln) in organisms which lack glutaminyl-tRNA synthetase. The reaction takes place in the presence of glutamine and ATP through an activated gamma-phospho-Glu-tRNA(Gln). The protein is Glutamyl-tRNA(Gln) amidotransferase subunit A of Oleidesulfovibrio alaskensis (strain ATCC BAA-1058 / DSM 17464 / G20) (Desulfovibrio alaskensis).